A 220-amino-acid polypeptide reads, in one-letter code: Protein Syd (220 aa).

It belongs to the Syd family.

The protein resides in the cell inner membrane. Its function is as follows. Interacts with the SecY protein in vivo. May bind preferentially to an uncomplexed state of SecY, thus functioning either as a chelating agent for excess SecY in the cell or as a regulatory factor that negatively controls the translocase function. The sequence is that of Protein Syd from Shewanella loihica (strain ATCC BAA-1088 / PV-4).